The chain runs to 309 residues: MASPVTVLENPIPKSGQHLLFFLTSKQQLALEQRPIESSLGYSAYVDHGVSQGVIVNPSSIAAAMRSSLVTVYGITKPGTDKQYISVISPTYNLIANRQNQPIETTQKALAACSDNDRNNWVYYLNLPQGTPQYAIYELNIQDSSSAPTVYSGPTPSGNSNLAAVYFSPNKDRFIIFSNTDTRHYLYWVNSTLQSANRISGTGSVMSASPLAATTITNVQTRSMTIFLYYMDVNTLLNRIVGKVTDNEIHWYANQVVEGAPPMKVDTLLTGVVVEGKWNCLYYIPDGDTEFRAFNDTIRDSFFDEPREG.

Residues Asn190 and Asn295 are each glycosylated (N-linked (GlcNAc...) asparagine).

It is found in the secreted. It localises to the cell wall. Its subcellular location is the membrane. Functionally, may participate in wall plasticization and/or intussusception or in cell wall turnover. The polypeptide is Wall-associated proteinase (Coccidioides immitis (strain RS) (Valley fever fungus)).